Consider the following 406-residue polypeptide: Imidazolonepropionase (406 aa).

Positions 72 and 74 each coordinate Fe(3+). Positions 72 and 74 each coordinate Zn(2+). 4-imidazolone-5-propanoate is bound by residues R81, Y144, and H177. Residue Y144 coordinates N-formimidoyl-L-glutamate. Residue H242 participates in Fe(3+) binding. Residue H242 participates in Zn(2+) binding. Q245 lines the 4-imidazolone-5-propanoate pocket. D317 contributes to the Fe(3+) binding site. D317 contacts Zn(2+). Residues N319 and G321 each coordinate N-formimidoyl-L-glutamate. T322 lines the 4-imidazolone-5-propanoate pocket.

This sequence belongs to the metallo-dependent hydrolases superfamily. HutI family. It depends on Zn(2+) as a cofactor. Requires Fe(3+) as cofactor.

The protein localises to the cytoplasm. The enzyme catalyses 4-imidazolone-5-propanoate + H2O = N-formimidoyl-L-glutamate. It participates in amino-acid degradation; L-histidine degradation into L-glutamate; N-formimidoyl-L-glutamate from L-histidine: step 3/3. Its function is as follows. Catalyzes the hydrolytic cleavage of the carbon-nitrogen bond in imidazolone-5-propanoate to yield N-formimidoyl-L-glutamate. It is the third step in the universal histidine degradation pathway. The polypeptide is Imidazolonepropionase (Yersinia pseudotuberculosis serotype O:3 (strain YPIII)).